The sequence spans 347 residues: Cannabinoid receptor 2 (347 aa).

Residues 1-33 (MEGCRETEVTNGSNGGLEFNPMKEYMILSSGQQ) are Extracellular-facing. Residue Asn-11 is glycosylated (N-linked (GlcNAc...) asparagine). The helical transmembrane segment at 34–59 (IAVAVLCTLMGLLSALENMAVLYIIL) threads the bilayer. Topologically, residues 60-71 (SSRRLRRKPSYL) are cytoplasmic. The helical transmembrane segment at 72–92 (FISSLAGADFLASVIFACNFV) threads the bilayer. The Extracellular portion of the chain corresponds to 93–104 (IFHVFHGVDSNA). A helical transmembrane segment spans residues 105 to 129 (IFLLKIGSVTMTFTASVGSLLLTAV). Residues 130 to 149 (DRYLCLCYPPTYKALVTRGR) are Cytoplasmic-facing. The helical transmembrane segment at 150-172 (ALVALCVMWVLSALISYLPLMGW) threads the bilayer. The Extracellular segment spans residues 173–188 (TCCPSPCSELFPLIPN). The helical transmembrane segment at 189–214 (DYLLGWLLFIAILFSGIIYTYGYVLW) threads the bilayer. The Cytoplasmic portion of the chain corresponds to 215 to 246 (KAHRHVATLAEHQDRQVPGIARMRLDVRLAKT). Residues 247–267 (LGLVLAVLLICWFPALALMGH) traverse the membrane as a helical segment. The Extracellular portion of the chain corresponds to 268-279 (SLVTTLSDQVKE). Residues 280 to 301 (AFAFCSMLCLVNSMVNPIIYAL) traverse the membrane as a helical segment. Topologically, residues 302 to 347 (RSGEIRSAAQHCLIGWKKYLQGLGPEGKEEGPRSSVTETEADVKTT) are cytoplasmic. The segment at 326-347 (PEGKEEGPRSSVTETEADVKTT) is disordered. Phosphoserine occurs at positions 335 and 336. Thr-338 is subject to Phosphothreonine.

The protein belongs to the G-protein coupled receptor 1 family. As to expression, expressed by cells of hematopoietic origin. Expressed in skin in suprabasal layers and hair follicles, in brain by neurons and glial cells and by osteoblasts, osteocytes, osteoclasts (at protein level).

The protein localises to the cell membrane. It is found in the cell projection. Its subcellular location is the dendrite. It localises to the perikaryon. Heterotrimeric G protein-coupled receptor for endocannabinoid 2-arachidonoylglycerol mediating inhibition of adenylate cyclase. May function in inflammatory response, nociceptive transmission and bone homeostasis. The chain is Cannabinoid receptor 2 (Cnr2) from Mus musculus (Mouse).